We begin with the raw amino-acid sequence, 766 residues long: Disabled homolog 2 (766 aa).

The segment covering 1–16 has biased composition (polar residues); sequence MSNEVETSTTNGQPDQ. A disordered region spans residues 1 to 36; sequence MSNEVETSTTNGQPDQQAAPKAPSKKEKKKGSEKTD. At Ser-2 the chain carries N-acetylserine. Ser-2 is subject to Phosphoserine. The 152-residue stretch at 45 to 196 folds into the PID domain; it reads GDGVKYKAKL…KAEENGSEAL (152 aa). Tyr-170 is modified (phosphotyrosine). Ser-193 is modified (phosphoserine). The tract at residues 230–447 is required for localization to clathrin-coated pits; that stretch reads ESKDILLVDL…KPGRGRRTAK (218 aa). Disordered regions lie at residues 284-482, 596-630, 659-683, and 699-766; these read LNFF…NFLD, PPPT…LKDI, RQPP…FSSY, and DFDA…NPFA. 2 consecutive short sequence motifs (DPF) follow at residues 293–295 and 298–300; these read DPF. 2 stretches are compositionally biased toward polar residues: residues 303-334 and 367-381; these read PDQS…QSKG and PSSQ…QNGV. A Phosphoserine modification is found at Ser-323. Residues Ser-326 and Ser-328 each carry the phosphoserine; in mitosis modification. A Phosphoserine modification is found at Ser-401. Residues 467–480 are compositionally biased toward polar residues; the sequence is MSPTGQPAVPQSNF. The segment covering 600-612 has biased composition (low complexity); the sequence is MSTQSSPQPMMSS. Positions 600–730 are sufficient for interaction with GRB2; that stretch reads MSTQSSPQPM…VLLGTKSADN (131 aa). Residues 617–625 form a required for interaction with CSK region; sequence PPQPPPRNG. The tract at residues 647–766 is required for interaction with MYO6; it reads KEVKEMFKDF…HRSPFGNPFA (120 aa). The required for interaction with GRB2 and CSK stretch occupies residues 661–669; it reads PPLVPSRKG. Phosphothreonine is present on Thr-671. Polar residues predominate over residues 673–683; that stretch reads PSGTSSAFSSY. The interval 707 to 723 is sufficient for interaction with SH3KBP1 SH3 domain; sequence NKINEPPKPAPRQGVLL. A phosphoserine mark is found at Ser-727 and Ser-759. Residues 727 to 753 are compositionally biased toward polar residues; it reads SADNSLENPFSKGFSSSNPSVVSQPAS.

Interacts (via NPXY motif) with DAB2 (via PID domain). Can interact (via PID domain) with LDLR, APP, APLP1 and APLP2, and weakly with INPP5D (via NPXY motifs); the interaction is impaired by tyrosine phosphorylation of the respective NPXY motifs. Can weakly interact (via PID domain) with LRP1 (via NPXY motif); the interaction is enhanced by tyrosine phosphorylation of the NPXY motif. Interacts with LRP2 (via NPXY motif); the interaction is not affected by tyrosine phosphorylation of the NPXY motif. Interacts with clathrin; in vitro can assemble clathrin triskelia into polyhedral coats. Interacts with AP2A2, ITGB1, ITGB3, ITGB5, PIAS2, DAB2IP, NOSTRIN, FCHO1, DVL3 and EPS15L1. Interacts with SH3KBP1 (via SH3 domains). Interacts with GRB2; competes with SOS1 for binding to GRB2 and the interaction is enhanced by EGF and NT-3 stimulation. Isoform p96 interacts with EPS15 and ITSN1; isoform p67 does not interact with EPS15 and only weakly interacts with ITSN1. Interacts with MAP3K7; the interaction is induced by TGF-beta stimulation and may mediate TGF-beta stimulated JNK activation. Interacts with AXIN1 and PPP1CA; the interactions are mutually exclusive. Interacts with the globular tail of MYO6. Interacts (via DPF motifs) with FCHO2; the interaction is direct and required for DAB2-mediated LDLR endocytosis. Interacts with LRP6; the interaction involves LRP6 phosphorylation by CK2 and sequesters LRP6 towards clathrin-mediated endocytosis. Associates with the TGF-beta receptor complex. Interacts with SMAD2 and SMAD3; the interactions are enhanced upon TGF-beta stimulation. Interacts with GRB2; the interaction is enhanced by EGF and NT-3 stimulation. Interacts with SRC; the interaction is enhanced by EGF stimulation. Post-translationally, phosphorylated on serine residues in response to mitogenic growth-factor stimulation. Phosphorylation during mitosis is leading to membrane displacement. As to expression, isoform p96 and isoform p67 are expressed in adult kidney and fibroblasts with isoform p96 being the predominant form. Isoform p67 is the predominant isoform expressed in embryonic visceral endoderm.

The protein resides in the cytoplasmic vesicle. Its subcellular location is the clathrin-coated vesicle membrane. It is found in the membrane. The protein localises to the clathrin-coated pit. It localises to the cytoplasm. The protein resides in the nucleus. Adapter protein that functions as a clathrin-associated sorting protein (CLASP) required for clathrin-mediated endocytosis of selected cargo proteins. Can bind and assemble clathrin, and binds simultaneously to phosphatidylinositol 4,5-bisphosphate (PtdIns(4,5)P2) and cargos containing non-phosphorylated NPXY internalization motifs, such as the LDL receptor, to recruit them to clathrin-coated pits. Can function in clathrin-mediated endocytosis independently of the AP-2 complex. Involved in endocytosis of integrin beta-1; this function seems to redundant with the AP-2 complex and seems to require DAB2 binding to endocytosis accessory EH domain-containing proteins such as EPS15, EPS15L1 and ITSN1. Involved in endocytosis of cystic fibrosis transmembrane conductance regulator/CFTR. Isoform p96 is involved in endocytosis of megalin/LRP2 lipoprotein receptor during embryonal development. Required for recycling of the TGF-beta receptor. Isoform p67 is not involved in LDL receptor endocytosis. Involved in CFTR trafficking to the late endosome. Involved in several receptor-mediated signaling pathways. Involved in TGF-beta receptor signaling and facilitates phosphorylation of the signal transducer SMAD2. Mediates TFG-beta-stimulated JNK activation. May inhibit the canoniocal Wnt/beta-catenin signaling pathway by stabilizing the beta-catenin destruction complex through a competing association with axin preventing its dephosphorylation through protein phosphatase 1 (PP1). Sequesters LRP6 towards clathrin-mediated endocytosis, leading to inhibition of Wnt/beta-catenin signaling. May activate non-canonical Wnt signaling. In cell surface growth factor/Ras signaling pathways proposed to inhibit ERK activation by interrupting the binding of GRB2 to SOS1 and to inhibit SRC by preventing its activating phosphorylation at 'Tyr-419'. Proposed to be involved in modulation of androgen receptor (AR) signaling mediated by SRC activation; seems to compete with AR for interaction with SRC. Plays a role in the CSF-1 signal transduction pathway. Plays a role in cellular differentiation. Involved in cell positioning and formation of visceral endoderm (VE) during embryogenesis and proposed to be required in the VE to respond to Nodal signaling coming from the epiblast. Required for the epithelial to mesenchymal transition, a process necessary for proper embryonic development. May be involved in myeloid cell differentiation and can induce macrophage adhesion and spreading. Isoform p67 may be involved in transcriptional regulation. May act as a tumor suppressor. This is Disabled homolog 2 (Dab2) from Mus musculus (Mouse).